The following is a 292-amino-acid chain: NAD kinase (292 aa).

Residue D73 is the Proton acceptor of the active site. Residues 73–74 (DG), 147–148 (NE), H158, R175, D177, 188–193 (TAYSLS), and Q247 each bind NAD(+).

This sequence belongs to the NAD kinase family. The cofactor is a divalent metal cation.

It is found in the cytoplasm. The enzyme catalyses NAD(+) + ATP = ADP + NADP(+) + H(+). In terms of biological role, involved in the regulation of the intracellular balance of NAD and NADP, and is a key enzyme in the biosynthesis of NADP. Catalyzes specifically the phosphorylation on 2'-hydroxyl of the adenosine moiety of NAD to yield NADP. This chain is NAD kinase, found in Shigella boydii serotype 18 (strain CDC 3083-94 / BS512).